Reading from the N-terminus, the 428-residue chain is GTPase Obg (428 aa).

An Obg domain is found at 1-158; the sequence is MFVDKVKVYA…RNLLLELKVL (158 aa). The 171-residue stretch at 159–329 folds into the OBG-type G domain; the sequence is ADVGLVGFPS…LMLAIADELE (171 aa). Residues 165-172, 190-194, 212-215, 282-285, and 310-312 each bind GTP; these read GFPSVGKS, FTTIT, DLPG, NKMD, and SAI. Residues Ser172 and Thr192 each contribute to the Mg(2+) site. The 79-residue stretch at 350-428 folds into the OCT domain; that stretch reads KHELPIEPFT…IMKFEFEFVE (79 aa).

Belongs to the TRAFAC class OBG-HflX-like GTPase superfamily. OBG GTPase family. As to quaternary structure, monomer. Mg(2+) serves as cofactor.

It localises to the cytoplasm. Its function is as follows. An essential GTPase which binds GTP, GDP and possibly (p)ppGpp with moderate affinity, with high nucleotide exchange rates and a fairly low GTP hydrolysis rate. Plays a role in control of the cell cycle, stress response, ribosome biogenesis and in those bacteria that undergo differentiation, in morphogenesis control. This Shouchella clausii (strain KSM-K16) (Alkalihalobacillus clausii) protein is GTPase Obg.